A 160-amino-acid polypeptide reads, in one-letter code: MKIMISQVGRELYKVPLRILDHRVFVNGEIEAFLENFEVRRNDSEVEKLFQVTETVGSLKYDLSRCSATGRGSGAENLAQLDTEVSHLLDGVNALLAKAKVERTASTQLQEARLAREQRRAEFLTNLEHGYRRIENSFEEKEEEIAELYSDLQLKLNIAK.

It belongs to the BLOC1S5 family. As to quaternary structure, component of the biogenesis of lysosome-related organelles complex-1 (BLOC-1) composed of Blos1, Blos2, Blos3, Blos4, Dysb, Muted, Pldn and Snapin.

In terms of biological role, component of the biogenesis of lysosome-related organelles complex-1 (BLOC-1) involved in pigment granule biogenesis. The protein is Biogenesis of lysosome-related organelles complex 1 subunit 5 of Drosophila melanogaster (Fruit fly).